Reading from the N-terminus, the 553-residue chain is Ergothioneine transport permease/ergothioneine binding protein EgtU (553 aa).

The ABC transmembrane type-1 domain occupies 57-236; that stretch reads LAQHFIIVAL…LFSVLADKFV (180 aa). The next 6 membrane-spanning stretches (helical) occupy residues 61 to 81, 98 to 118, 122 to 142, 182 to 202, 219 to 239, and 261 to 281; these read FIIVALSGFLVLVFGVLIGVF, FLYTIPSLALFALFIPVIGVG, ALLVLVLYGLLPIVYSTYNAL, IAVVMLVAMAGIGALIGAGGL, VAGSLIIALFSVLADKFVSVF, and VYTNLAVFLFLLLASALWLIP. Over 282–553 the chain is Periplasmic; the sequence is RNAIEEKPLV…AKDFLERLGL (272 aa). The interval 288–549 is ergothioneine binding domain; that stretch reads KPLVVATKPS…PKIVAKDFLE (262 aa).

It in the N-terminal section; belongs to the binding-protein-dependent transport system permease family. This sequence in the C-terminal section; belongs to the OsmX family. In terms of assembly, the complex is composed of two ATP-binding proteins (EgtV) and two transmembrane proteins (EgtU).

Its subcellular location is the cell inner membrane. In terms of biological role, part of the ABC transporter complex EgtUV involved in the uptake of ergothioneine (EGT), a natural low-molecular weight (LMW) thiol antioxidant which protects H.pylori against bleach stress. Responsible for the translocation of the substrate across the membrane. Also contains a C-terminal periplasmic solute-binding domain (SBD) which binds to ergothioneine with low-micromolar affinity. Cannot bind the structurally similar compounds glycine betaine, choline, proline, carnitine or histidine. The polypeptide is Ergothioneine transport permease/ergothioneine binding protein EgtU (Helicobacter pylori (strain G27)).